A 68-amino-acid polypeptide reads, in one-letter code: P21 prophage-derived head-stabilizing protein (68 aa).

This sequence belongs to the lambda phage gpW family.

This Escherichia coli O6:H1 (strain CFT073 / ATCC 700928 / UPEC) protein is P21 prophage-derived head-stabilizing protein.